The sequence spans 190 residues: Peptidyl-prolyl cis-trans isomerase A (190 aa).

The N-terminal stretch at 1-23 is a signal peptide; the sequence is MSKRILAAVVTVLSLTAFSPAFA. Residues 26 to 187 enclose the PPIase cyclophilin-type domain; the sequence is TSTHVLLTTS…KPIVIQSAKI (162 aa).

Belongs to the cyclophilin-type PPIase family.

The protein localises to the periplasm. It carries out the reaction [protein]-peptidylproline (omega=180) = [protein]-peptidylproline (omega=0). PPIases accelerate the folding of proteins. It catalyzes the cis-trans isomerization of proline imidic peptide bonds in oligopeptides. This chain is Peptidyl-prolyl cis-trans isomerase A (rotA), found in Dickeya dadantii (strain 3937) (Erwinia chrysanthemi (strain 3937)).